Here is a 1059-residue protein sequence, read N- to C-terminus: MEQASVPSYVNIPPIAKTRSTSHLAPTPEHHRSVSYEDTTTASTSTDSVPEVRIRSESSQVSRESPPIRASKAFVASYEYEAQKDDELNLPLGAIITLVTVETNEDGWYRGELNGKVGLFPSNYAREVTYKDNLVEFKQDEIMLPVAVRTLSDCQIGHGATATVFKMDIKIKKELQNGRMGEAVGDQMKAALKRFNRHASNFRADVVSTDEQLEQLKREANLVNGLSHNNIVRLLGICLEDPYFGLLLELCEGSSLRNVCRNLNSDAAIPLGVLIDWATQVAEGMEYLTKQGYVHRDLKADNVLVKEEVCLCMDEEMFQYAYCLKCGKRPFDKLQLKITDFGVTRKMTADANRFSTAGTYAWLAPEAFKEGTWSEASDVWSYGVVLWELLTREEPYQGHIPATIAFQIANKGQNLSIGDSCPDRWKKLMQDCWNLEPNFRPKFSTLAISFKQYAKEFKDTHLQRAPSKMAVKELYSECFADKTKEEFEKRFHDLYAGSGDINRKNRHSIAPETKARRLKHHKPKKADITGPTEVKHILSVQKDDKNFRVKTYDQSSTGGTLPRLNERQSTLSLSSPDLFHISNLISGSNTVGHSAHRISRKNAIRHKKNQHRMFESPVVSPTMDDSNTFSTIDNADEVDPNHSKESKKGGTLSRAWAKLPWNKRDSKEDHDERAVAGSISSRSSSTTSSNRLITGQTTRGASAAGLLEIGARSRAQSTADGWEDPNTTKKHKVSPSDKRPVKTTNQTERYVKDLEKDTPLRPAQLPPTHRKSALDQTIPASPNSPDSINNFHPMPLSSRRTTANSSSDGAPCYDALVSHSYGAGHGHKNHFGLSDTIPLFPEEPTHYDMGPGRPFGTNGRAIVNQGGDYYGNISGQNYEGFGHGRSINQSTQYYPVGGGCDDYIPIVQKTVIKPTVGEVGNSPYSENIRCATRNVQNPQYIQCKKNQNPRRIPALPMKIQSESNLVTSGMVFTPRDEQLNGIGNSLSSLSLNEPPDIPAPLPPVVTYPIPASLISPSNRVSMSPPTRMAPVLPLGAMSSPRIMDKEILKNSSVEGTEIY.

A disordered region spans residues 1-66 (MEQASVPSYV…ESSQVSRESP (66 aa)). The span at 38-48 (DTTTASTSTDS) shows a compositional bias: low complexity. The SH3 domain occupies 69-130 (RASKAFVASY…PSNYAREVTY (62 aa)). Residues 150-454 (TLSDCQIGHG…TLAISFKQYA (305 aa)) form the Protein kinase domain. ATP contacts are provided by residues 156–164 (IGHGATATV) and Lys193. The stretch at 199–224 (ASNFRADVVSTDEQLEQLKREANLVN) forms a coiled coil. Asp297 serves as the catalytic Proton acceptor. Residue Ser355 is modified to Phosphoserine; by max-2 and tpa-1. Disordered stretches follow at residues 617-699 (PVVS…QTTR) and 714-808 (RAQS…SSSD). Positions 623 to 633 (MDDSNTFSTID) are enriched in polar residues. 2 stretches are compositionally biased toward basic and acidic residues: residues 639 to 648 (DPNHSKESKK) and 662 to 674 (NKRDSKEDHDERA). The span at 678-689 (SISSRSSSTTSS) shows a compositional bias: low complexity. Polar residues predominate over residues 690-699 (NRLITGQTTR). A compositionally biased stretch (basic and acidic residues) spans 749–759 (RYVKDLEKDTP). 2 stretches are compositionally biased toward polar residues: residues 774–790 (LDQTIPASPNSPDSINN) and 798–808 (SRRTTANSSSD). The NPQY motif signature appears at 937-940 (NPQY). Residue Tyr940 is modified to Phosphotyrosine.

It belongs to the protein kinase superfamily. STE Ser/Thr protein kinase family. MAP kinase kinase kinase subfamily. As to quaternary structure, interacts with max-2; the interaction is independent of max-2 and mlk-1 kinase activities. May interact (via NPQY motif when phosphorylated on tyrosine residue) with shc-1 (via PID domain); the interaction may facilitate mek-1 phosphorylation by bringing mlk-1 and mek-1 together. Interacts with svh-2 (via cytoplasmic domain). Interacts with tpa-1. The cofactor is Mg(2+). May be phosphorylated on tyrosine residues by svh-2. In terms of processing, may be ubiquitinated and targeted for proteasomal degradation by E3 ubiquitin ligase rpm-1. Expressed in pharynx, intestine, hypodermis, neurons and body muscles.

It carries out the reaction L-seryl-[protein] + ATP = O-phospho-L-seryl-[protein] + ADP + H(+). The enzyme catalyses L-threonyl-[protein] + ATP = O-phospho-L-threonyl-[protein] + ADP + H(+). Its activity is regulated as follows. Activated by phosphorylation at Ser-355. May be activated by svh-2-mediated phosphorylation. Its function is as follows. Serine/threonine-protein kinase which, by phosphorylating and activating mek-1, plays an important role in the activation of the JNK pathway composed of mlk-1, mek-1 and kgb-1. Involved in the response to environmental stress such as heavy metals. By activating the JNK pathway downstream of tyrosine receptor svh-2, plays a role in axon regeneration after injury. This Caenorhabditis elegans protein is Mitogen-activated protein kinase kinase kinase mlk-1.